A 149-amino-acid polypeptide reads, in one-letter code: Small ribosomal subunit protein bS18c (149 aa).

The tract at residues 1–23 (MDKITGPFRKSKKSFRKPLPPIQ) is disordered.

Belongs to the bacterial ribosomal protein bS18 family. In terms of assembly, part of the 30S ribosomal subunit.

It localises to the plastid. The polypeptide is Small ribosomal subunit protein bS18c (Cuscuta obtusiflora (Peruvian dodder)).